We begin with the raw amino-acid sequence, 553 residues long: HTH-type transcriptional regulator SgrR (553 aa).

In terms of domain architecture, HTH marR-type spans 1-113 (MSTSRLQQQF…RQMLLSQLGR (113 aa)). The segment at residues 26-49 (LQALAEVLNCSRRHVRSLLGKMQH) is a DNA-binding region (H-T-H motif). Residues 163-494 (ELEPDLSHHW…EELHQDIESW (332 aa)) are solute-binding.

Its function is as follows. Activates the small RNA gene sgrS under glucose-phosphate stress conditions as well as yfdZ. Represses its own transcription under both stress and non-stress conditions. Might act as a sensor of the intracellular accumulation of phosphoglucose by binding these molecules in its C-terminal solute-binding domain. The sequence is that of HTH-type transcriptional regulator SgrR from Yersinia pseudotuberculosis serotype I (strain IP32953).